A 218-amino-acid chain; its full sequence is Peroxiredoxin-like 2A (218 aa).

A thioredoxin-like fold region spans residues 3–101; it reads MWSIGVGAVG…DELGVPLYAV (99 aa). Residues C74 and C77 each act as redox-active in the active site.

Belongs to the peroxiredoxin-like PRXL2 family. PRXL2A subfamily. In terms of tissue distribution, expressed in kidney, liver, skin, and brain. Widely expressed with highest levels detected in adipose tissue.

The protein resides in the cytoplasm. It is found in the secreted. Involved in redox regulation of the cell. Acts as an antioxidant. Inhibits TNFSF11-induced NFKB1 and JUN activation and osteoclast differentiation. May affect bone resorption and help to maintain bone mass. Acts as a negative regulator of macrophage-mediated inflammation by inhibiting macrophage production of inflammatory cytokines, probably through suppression of the MAPK signaling pathway. The polypeptide is Peroxiredoxin-like 2A (Prxl2a) (Mus musculus (Mouse)).